A 218-amino-acid chain; its full sequence is MATDQKRGLLIVFEGLDRSGKSTQAKRLVESINKKSTESGDASSSPSAVLQAFPDRSSSIGKLIDQYLRKEIDMDEHALHLLFSADRFSKNQMIRDNIAKGIDVICDRYCYSGVAYSLAKGLPEQWVRSSDVGLPKPDAVLFFDVSPEVAAQRGGFGEERLETATIQQKVAAVMPTLRDDAYWKTVNADGDLDSVEKNVFRIYENLDREKPFESLEKI.

Residue 15 to 22 (GLDRSGKS) participates in ATP binding.

It belongs to the thymidylate kinase family.

It carries out the reaction dTMP + ATP = dTDP + ADP. It functions in the pathway pyrimidine metabolism; dTTP biosynthesis. In terms of biological role, catalyzes the conversion of dTMP to dTDP. This chain is Thymidylate kinase, found in Caenorhabditis elegans.